A 335-amino-acid polypeptide reads, in one-letter code: Holliday junction branch migration complex subunit RuvB (335 aa).

The segment at 1–181 is large ATPase domain (RuvB-L); that stretch reads MDRIVEIEKY…FGMQFRLEFY (181 aa). ATP-binding positions include L20, R21, G62, K65, T66, T67, 128–130, R171, Y181, and R218; that span reads EDY. T66 is a binding site for Mg(2+). The interval 182–252 is small ATPAse domain (RuvB-S); sequence KDSELALILQ…RANEALNSLG (71 aa). Residues 255 to 335 form a head domain (RuvB-H) region; that stretch reads ELGFDAMDLR…LNYEKTLFEE (81 aa). DNA-binding residues include R309 and R314.

This sequence belongs to the RuvB family. As to quaternary structure, homohexamer. Forms an RuvA(8)-RuvB(12)-Holliday junction (HJ) complex. HJ DNA is sandwiched between 2 RuvA tetramers; dsDNA enters through RuvA and exits via RuvB. An RuvB hexamer assembles on each DNA strand where it exits the tetramer. Each RuvB hexamer is contacted by two RuvA subunits (via domain III) on 2 adjacent RuvB subunits; this complex drives branch migration. In the full resolvosome a probable DNA-RuvA(4)-RuvB(12)-RuvC(2) complex forms which resolves the HJ.

It is found in the cytoplasm. It catalyses the reaction ATP + H2O = ADP + phosphate + H(+). In terms of biological role, the RuvA-RuvB-RuvC complex processes Holliday junction (HJ) DNA during genetic recombination and DNA repair, while the RuvA-RuvB complex plays an important role in the rescue of blocked DNA replication forks via replication fork reversal (RFR). RuvA specifically binds to HJ cruciform DNA, conferring on it an open structure. The RuvB hexamer acts as an ATP-dependent pump, pulling dsDNA into and through the RuvAB complex. RuvB forms 2 homohexamers on either side of HJ DNA bound by 1 or 2 RuvA tetramers; 4 subunits per hexamer contact DNA at a time. Coordinated motions by a converter formed by DNA-disengaged RuvB subunits stimulates ATP hydrolysis and nucleotide exchange. Immobilization of the converter enables RuvB to convert the ATP-contained energy into a lever motion, pulling 2 nucleotides of DNA out of the RuvA tetramer per ATP hydrolyzed, thus driving DNA branch migration. The RuvB motors rotate together with the DNA substrate, which together with the progressing nucleotide cycle form the mechanistic basis for DNA recombination by continuous HJ branch migration. Branch migration allows RuvC to scan DNA until it finds its consensus sequence, where it cleaves and resolves cruciform DNA. This is Holliday junction branch migration complex subunit RuvB from Campylobacter jejuni (strain RM1221).